Here is a 287-residue protein sequence, read N- to C-terminus: uncharacterized protein (287 aa).

The protein belongs to the A.longa ORF167/ORF288 family.

The protein resides in the plastid. This is an uncharacterized protein from Euglena longa (Euglenophycean alga).